A 155-amino-acid polypeptide reads, in one-letter code: Ribosome maturation factor RimP (155 aa).

The protein belongs to the RimP family.

It is found in the cytoplasm. Functionally, required for maturation of 30S ribosomal subunits. The polypeptide is Ribosome maturation factor RimP (Staphylococcus haemolyticus (strain JCSC1435)).